The following is a 261-amino-acid chain: Cytochrome c oxidase subunit 3 (261 aa).

Topologically, residues 1-15 (MTHQAHAYHMVDPSP) are mitochondrial matrix. Residues 16–34 (WPLTGAVAALLMTSGLAVW) form a helical membrane-spanning segment. The Mitochondrial intermembrane segment spans residues 35–40 (FHFHST). A helical membrane pass occupies residues 41–66 (TLMALGTVLLLLTMYQWWRDIIREGT). Residues 67 to 72 (FQGHHT) are Mitochondrial matrix-facing. Residues 73–105 (PPVQKGLRYGMILFITSEVFFFLGFFWAFYHAS) traverse the membrane as a helical segment. Residues 106 to 128 (LAPTPELGGCWPPTGITTLDPFE) are Mitochondrial intermembrane-facing. A helical membrane pass occupies residues 129-152 (VPLLNTAVLLASGVTVTWAHHSIM). Topologically, residues 153–155 (EGE) are mitochondrial matrix. The chain crosses the membrane as a helical span at residues 156–183 (RKQAIHSLTLTILLGFYFTFLQGLEYYD). At 184 to 190 (APFTIAD) the chain is on the mitochondrial intermembrane side. A helical membrane pass occupies residues 191 to 223 (GVYGSTFFVATGFHGLHVIIGSTFLAVCLLRQI). The Mitochondrial matrix portion of the chain corresponds to 224 to 232 (RYHFTSEHH). Residues 233 to 256 (FGFEAAAWYWHFVDVVWLFLYISI) form a helical membrane-spanning segment. The Mitochondrial intermembrane portion of the chain corresponds to 257–261 (YWWGS).

This sequence belongs to the cytochrome c oxidase subunit 3 family. In terms of assembly, component of the cytochrome c oxidase (complex IV, CIV), a multisubunit enzyme composed of 14 subunits. The complex is composed of a catalytic core of 3 subunits MT-CO1, MT-CO2 and MT-CO3, encoded in the mitochondrial DNA, and 11 supernumerary subunits COX4I, COX5A, COX5B, COX6A, COX6B, COX6C, COX7A, COX7B, COX7C, COX8 and NDUFA4, which are encoded in the nuclear genome. The complex exists as a monomer or a dimer and forms supercomplexes (SCs) in the inner mitochondrial membrane with NADH-ubiquinone oxidoreductase (complex I, CI) and ubiquinol-cytochrome c oxidoreductase (cytochrome b-c1 complex, complex III, CIII), resulting in different assemblies (supercomplex SCI(1)III(2)IV(1) and megacomplex MCI(2)III(2)IV(2)).

The protein resides in the mitochondrion inner membrane. The enzyme catalyses 4 Fe(II)-[cytochrome c] + O2 + 8 H(+)(in) = 4 Fe(III)-[cytochrome c] + 2 H2O + 4 H(+)(out). Functionally, component of the cytochrome c oxidase, the last enzyme in the mitochondrial electron transport chain which drives oxidative phosphorylation. The respiratory chain contains 3 multisubunit complexes succinate dehydrogenase (complex II, CII), ubiquinol-cytochrome c oxidoreductase (cytochrome b-c1 complex, complex III, CIII) and cytochrome c oxidase (complex IV, CIV), that cooperate to transfer electrons derived from NADH and succinate to molecular oxygen, creating an electrochemical gradient over the inner membrane that drives transmembrane transport and the ATP synthase. Cytochrome c oxidase is the component of the respiratory chain that catalyzes the reduction of oxygen to water. Electrons originating from reduced cytochrome c in the intermembrane space (IMS) are transferred via the dinuclear copper A center (CU(A)) of subunit 2 and heme A of subunit 1 to the active site in subunit 1, a binuclear center (BNC) formed by heme A3 and copper B (CU(B)). The BNC reduces molecular oxygen to 2 water molecules using 4 electrons from cytochrome c in the IMS and 4 protons from the mitochondrial matrix. The chain is Cytochrome c oxidase subunit 3 (mt-co3) from Gadus morhua (Atlantic cod).